The chain runs to 160 residues: Cytochrome b6-f complex subunit 4 (160 aa).

A run of 3 helical transmembrane segments spans residues 36-56 (LLYI…GLAI), 95-115 (LLGV…PFLE), and 131-151 (TVFL…TLPI).

Belongs to the cytochrome b family. PetD subfamily. In terms of assembly, the 4 large subunits of the cytochrome b6-f complex are cytochrome b6, subunit IV (17 kDa polypeptide, petD), cytochrome f and the Rieske protein, while the 4 small subunits are petG, petL, petM and petN. The complex functions as a dimer.

The protein resides in the plastid. The protein localises to the chloroplast thylakoid membrane. Functionally, component of the cytochrome b6-f complex, which mediates electron transfer between photosystem II (PSII) and photosystem I (PSI), cyclic electron flow around PSI, and state transitions. The sequence is that of Cytochrome b6-f complex subunit 4 from Acorus calamus (Sweet flag).